Consider the following 268-residue polypeptide: 4-hydroxy-tetrahydrodipicolinate reductase (268 aa).

Residues 10 to 15 (GASGRM) and aspartate 36 each bind NAD(+). Arginine 37 contacts NADP(+). Residues 99–101 (GTT) and 123–126 (SANM) each bind NAD(+). Residue histidine 156 is the Proton donor/acceptor of the active site. Histidine 157 contributes to the (S)-2,3,4,5-tetrahydrodipicolinate binding site. Catalysis depends on lysine 160, which acts as the Proton donor. Residue 166–167 (GT) coordinates (S)-2,3,4,5-tetrahydrodipicolinate.

The protein belongs to the DapB family.

The protein localises to the cytoplasm. The catalysed reaction is (S)-2,3,4,5-tetrahydrodipicolinate + NAD(+) + H2O = (2S,4S)-4-hydroxy-2,3,4,5-tetrahydrodipicolinate + NADH + H(+). The enzyme catalyses (S)-2,3,4,5-tetrahydrodipicolinate + NADP(+) + H2O = (2S,4S)-4-hydroxy-2,3,4,5-tetrahydrodipicolinate + NADPH + H(+). Its pathway is amino-acid biosynthesis; L-lysine biosynthesis via DAP pathway; (S)-tetrahydrodipicolinate from L-aspartate: step 4/4. In terms of biological role, catalyzes the conversion of 4-hydroxy-tetrahydrodipicolinate (HTPA) to tetrahydrodipicolinate. This is 4-hydroxy-tetrahydrodipicolinate reductase from Burkholderia mallei (strain NCTC 10247).